Consider the following 150-residue polypeptide: Deoxyuridine 5'-triphosphate nucleotidohydrolase (150 aa).

Residues 69-71, N82, and 86-88 contribute to the substrate site; these read RSG and LID.

Belongs to the dUTPase family. The cofactor is Mg(2+).

The enzyme catalyses dUTP + H2O = dUMP + diphosphate + H(+). The protein operates within pyrimidine metabolism; dUMP biosynthesis; dUMP from dCTP (dUTP route): step 2/2. In terms of biological role, this enzyme is involved in nucleotide metabolism: it produces dUMP, the immediate precursor of thymidine nucleotides and it decreases the intracellular concentration of dUTP so that uracil cannot be incorporated into DNA. The protein is Deoxyuridine 5'-triphosphate nucleotidohydrolase of Methylobacillus flagellatus (strain ATCC 51484 / DSM 6875 / VKM B-1610 / KT).